Consider the following 67-residue polypeptide: Beta-mammal toxin CeII9 (67 aa).

One can recognise an LCN-type CS-alpha/beta domain in the interval 1-66 (KEGYLVNHST…VWPLPKKTCN (66 aa)). Cystine bridges form between Cys12-Cys65, Cys16-Cys41, Cys25-Cys46, and Cys29-Cys48.

This sequence belongs to the long (4 C-C) scorpion toxin superfamily. Sodium channel inhibitor family. Beta subfamily. In terms of tissue distribution, expressed by the venom gland.

Its subcellular location is the secreted. Its function is as follows. Beta toxins bind at site-4 of sodium channels and shift the voltage of activation toward more negative potentials thereby affecting sodium channel activation and promoting spontaneous and repetitive firing. This toxin is active against mammals and lethal to mice. Selectively modulates Nav1.4/SCN4A, a sodium channel present in both denervated and innervated skeletal muscle. The polypeptide is Beta-mammal toxin CeII9 (Centruroides elegans (Bark scorpion)).